The following is a 403-amino-acid chain: Na(+)/H(+) antiporter NhaA (403 aa).

12 helical membrane-spanning segments follow: residues 25–45 (IAGLVLLVSMLVAFFWVNSPF), 70–90 (LILWINEGLMIVFFFLIGLEI), 105–125 (IALPAFAALGGMLVPAAIFLA), 136–156 (GWAVPAATDIVLALALLAMLG), 165–185 (VFLTALAIFDDFGTLVIIALA), 188–208 (EGLSLPSLLMAALGTLALIVL), 213–233 (VASLTAYVLVGVFVWVSVLES), 234–254 (GVHSTLAGVIIAWCIPMRVSG), 269–289 (VALLIVPLFAFFNAGIDLGGV), 302–322 (IILGLFVGKQVGVMLGVGLAV), 340–360 (GAALLSGVGFTMSLFVAGLAF), and 369–389 (VNLAVVVGSVLSATGGLVVLA).

It belongs to the NhaA Na(+)/H(+) (TC 2.A.33) antiporter family.

The protein localises to the cell inner membrane. The enzyme catalyses Na(+)(in) + 2 H(+)(out) = Na(+)(out) + 2 H(+)(in). In terms of biological role, na(+)/H(+) antiporter that extrudes sodium in exchange for external protons. The protein is Na(+)/H(+) antiporter NhaA of Maricaulis maris (strain MCS10) (Caulobacter maris).